Here is a 51-residue protein sequence, read N- to C-terminus: Otoconin-90 (51 aa).

This sequence belongs to the phospholipase A2 family. As to quaternary structure, interacts with OTOL1.

It localises to the secreted. Its function is as follows. Major protein of the otoconia, a calcium carbonate structure in the saccule and utricle of the ear. Together with OTOL1, acts as a scaffold for otoconia biomineralization: sequesters calcium and forms interconnecting fibrils between otoconia that are incorporated into the calcium crystal structure. Together with OTOL1, modulates calcite crystal morphology and growth kinetics. It is unlikely that this protein has phospholipase A2 activity. The chain is Otoconin-90 (OC90) from Cavia porcellus (Guinea pig).